A 333-amino-acid polypeptide reads, in one-letter code: Regulator of rDNA transcription protein 5 (333 aa).

The segment at 1–22 (MFERQSNNPEPIEVSDNNPERE) is disordered. The RRM 1 domain occupies 31–114 (TRIYISNLDY…RNLKVKLYVP (84 aa)). 2 disordered regions span residues 123 to 185 (PAPK…DTVY) and 281 to 333 (GIAE…SVVA). The segment covering 125–137 (PKPRRLSKLRRSK) has biased composition (basic residues). 2 stretches are compositionally biased toward polar residues: residues 145-160 (NAAS…QERG) and 169-182 (AANN…TSDD). The RRM 2 domain maps to 182 to 267 (DTVYCGYLPK…KKISVKPAYI (86 aa)). A compositionally biased stretch (gly residues) spans 298 to 308 (GNGGQPAGPGV). A compositionally biased stretch (polar residues) spans 313-327 (SNPQQNCDNSNNVQP).

It belongs to the RRT5 family.

Its function is as follows. May be involved in the modulation of rDNA transcription. This is Regulator of rDNA transcription protein 5 (RRT5) from Vanderwaltozyma polyspora (strain ATCC 22028 / DSM 70294 / BCRC 21397 / CBS 2163 / NBRC 10782 / NRRL Y-8283 / UCD 57-17) (Kluyveromyces polysporus).